Reading from the N-terminus, the 152-residue chain is Lipoprotein signal peptidase (152 aa).

2 consecutive transmembrane segments (helical) span residues 55–75 (NKMWFFYIITVVFVVFIVFYM) and 85–105 (LGISLGLILGGAIGNFIDRVF). Residues D111 and D129 contribute to the active site. Residues 124 to 144 (VFNIADSALCIGVVLIIIQTL) traverse the membrane as a helical segment.

This sequence belongs to the peptidase A8 family.

The protein localises to the cell membrane. The catalysed reaction is Release of signal peptides from bacterial membrane prolipoproteins. Hydrolyzes -Xaa-Yaa-Zaa-|-(S,diacylglyceryl)Cys-, in which Xaa is hydrophobic (preferably Leu), and Yaa (Ala or Ser) and Zaa (Gly or Ala) have small, neutral side chains.. Its pathway is protein modification; lipoprotein biosynthesis (signal peptide cleavage). Functionally, this protein specifically catalyzes the removal of signal peptides from prolipoproteins. This chain is Lipoprotein signal peptidase, found in Bacillus cereus (strain G9842).